The sequence spans 315 residues: MTDQVYVTLREDQDKLWNLFHYHKNEMIVTKSGRKMFPKLEYVVRGLTPNKLYAMMLHIEPSDDHRYKFSSGEWVKSGKAEKHREPKKLWHADGVRSGKEWMTNPVCFDRVKITNCAESTNASMIFLHSMHKYTPVMSIYESPSESPFSVPQPSTRLVTSVRLTYTEFIAVTAYQNDAVIKLKIKFNPFAKGFREGSQSDRKRNSPSADDSTTDESSSQVSSPQPKKSRTVSVSPPLMPRILPTMIPPPPAINPLFYSLPYFSHLAATGNFPPVPFQFPFGLPCFSPMSFPTPPPSLKNVKKEEQEDIEQEINVV.

Residues 11–195 (EDQDKLWNLF…FNPFAKGFRE (185 aa)) constitute a DNA-binding region (T-box). The span at 193 to 203 (FREGSQSDRKR) shows a compositional bias: basic and acidic residues. Disordered stretches follow at residues 193–235 (FREG…SVSP) and 293–315 (PPPSLKNVKKEEQEDIEQEINVV). The span at 205–225 (SPSADDSTTDESSSQVSSPQP) shows a compositional bias: low complexity. The segment covering 305–315 (QEDIEQEINVV) has biased composition (acidic residues).

The protein resides in the nucleus. Transcription factor. Involved in the control of early morphogenesis of the intestine, hypodermis and body-wall muscle. Involved in regulating expression of vab-7. Appears to have partially redundant function to tbx-9. The chain is T-box transcription factor tbx-8 (tbx-8) from Caenorhabditis elegans.